The primary structure comprises 99 residues: Large ribosomal subunit protein uL23 (99 aa).

The protein belongs to the universal ribosomal protein uL23 family. In terms of assembly, part of the 50S ribosomal subunit. Contacts protein L29, and trigger factor when it is bound to the ribosome.

Its function is as follows. One of the early assembly proteins it binds 23S rRNA. One of the proteins that surrounds the polypeptide exit tunnel on the outside of the ribosome. Forms the main docking site for trigger factor binding to the ribosome. In Hydrogenobaculum sp. (strain Y04AAS1), this protein is Large ribosomal subunit protein uL23.